The chain runs to 99 residues: Integration host factor subunit alpha (99 aa).

The disordered stretch occupies residues 49-75; that stretch reads FGNFDLRDKNQRPGRNPKTGEDIPITA.

This sequence belongs to the bacterial histone-like protein family. Heterodimer of an alpha and a beta chain.

In terms of biological role, this protein is one of the two subunits of integration host factor, a specific DNA-binding protein that functions in genetic recombination as well as in transcriptional and translational control. The polypeptide is Integration host factor subunit alpha (Salmonella agona (strain SL483)).